The sequence spans 301 residues: Isonocardicin synthase (301 aa).

In terms of assembly, monomer.

The enzyme catalyses nocardicin G + S-adenosyl-L-methionine = isonocardicin C + S-methyl-5'-thioadenosine + H(+). The catalysed reaction is nocardicin E + S-adenosyl-L-methionine = isonocardicin A + S-methyl-5'-thioadenosine + H(+). It participates in antibiotic biosynthesis. In terms of biological role, involved in the biosynthesis of the beta-lactam antibiotic nocardicin A. In the presence of S-adenosyl-L-methionine (AdoMet), catalyzes the transfer of a 3-amino-3-carboxypropyl group from AdoMet to nocardicin G, forming isonocardicin C. Can also catalyze the transformation of nocardicin E and F to isonocardicin A and B, respectively, but in vivo substrate is probably nocardicin G. The protein is Isonocardicin synthase of Nocardia uniformis subsp. tsuyamanensis.